The chain runs to 371 residues: 4-hydroxy-3-methylbut-2-en-1-yl diphosphate synthase (flavodoxin) (371 aa).

[4Fe-4S] cluster-binding residues include C270, C273, C305, and E312.

Belongs to the IspG family. It depends on [4Fe-4S] cluster as a cofactor.

It carries out the reaction (2E)-4-hydroxy-3-methylbut-2-enyl diphosphate + oxidized [flavodoxin] + H2O + 2 H(+) = 2-C-methyl-D-erythritol 2,4-cyclic diphosphate + reduced [flavodoxin]. The protein operates within isoprenoid biosynthesis; isopentenyl diphosphate biosynthesis via DXP pathway; isopentenyl diphosphate from 1-deoxy-D-xylulose 5-phosphate: step 5/6. Its function is as follows. Converts 2C-methyl-D-erythritol 2,4-cyclodiphosphate (ME-2,4cPP) into 1-hydroxy-2-methyl-2-(E)-butenyl 4-diphosphate. The sequence is that of 4-hydroxy-3-methylbut-2-en-1-yl diphosphate synthase (flavodoxin) from Shewanella woodyi (strain ATCC 51908 / MS32).